The following is a 157-amino-acid chain: Arginine regulator (157 aa).

It belongs to the ArgR family.

Its subcellular location is the cytoplasm. The protein operates within amino-acid degradation; L-arginine degradation via ADI pathway. Regulates the transcription of the arc operon, involved in arginine catabolism. In Streptococcus pyogenes serotype M3 (strain SSI-1), this protein is Arginine regulator (argR1).